A 199-amino-acid chain; its full sequence is Translation initiation factor IF-3 (199 aa).

The protein belongs to the IF-3 family. Monomer.

The protein resides in the cytoplasm. Its function is as follows. IF-3 binds to the 30S ribosomal subunit and shifts the equilibrium between 70S ribosomes and their 50S and 30S subunits in favor of the free subunits, thus enhancing the availability of 30S subunits on which protein synthesis initiation begins. The polypeptide is Translation initiation factor IF-3 (Mycoplasmopsis pulmonis (strain UAB CTIP) (Mycoplasma pulmonis)).